A 1016-amino-acid polypeptide reads, in one-letter code: MSSYLRSFIFGLLTISLAQCSPILKDTKDTKFSTGSNISLKKRDTNVFDSVVDTINPASYFGTVSHPVTPAGVSTDSLSSPIETNKFFDNNLLGSRTNFMYADPFRYWWQSSDTMGGICIAHTDDNQRVMDTDDTIPSYYYEPIGICSLGFGASGITSNTDPIVDEIDQMSARFTFSWDSSSMQLTLTEGMAVTTAVYTNAIPQIFSSTLYINDFVEVPGTSAVQKYRVTMSDNHVWLIYIYGDSLTLTESTSQMLVGSNTFNGYIQIAKIPLGDGTAEALYDTYAGVYITGISISGYVEDAVGYYSFDFTTAGDTSVEPLFFLLPHQVDTAVSGTKVTSIVLASLVSGDMNAAAGNSITFAEAIPQDIGFLPWSPTGGQIGYSEEALEIIAEVAGTELGEDFSANSNLNSMYYSGKVLAKYAMLCVTINDILGDETSSEQCIQKLEAAFARFVDNQQIYPLTYDNTWKGVVSVAGLSGDSLADFGNSYYNDHHFHYGYFVFTAAVIGHIDPDWINTGNNKEWVNFLVRDVANPSSNDPYFPKHRMIDIYHGHGWASGLFESNDGKDEESTSEDYNFFFGMKLWGQVIGDSDMEDRANIILGIERNALNKYMLYADGNVQPTSMQPNYVAGITFMNKITHTTYFGTNIEYIQGIHMLPITPISAFIRGPSFVLAEWNALLASVIDYVDSGWRSLLYANLAIAEPEESYEYFSSSDFNTDYLDDGASRAWYLAYAAGLWANDAVYYPVSSSSTTTTSTSTGSVTTTSTTATASCTLPISYTSTPTTTSISGTCNGATFDASLYVCDGTVLCPIVNGVSYQNCNGACYNPSQYGCDNGALGPVQSSSTTSSITPTPTTTSSITPTPTTTSTTTTAQSTGMQLCGSNYYDASSYYCDNDQLCPIIDGVDYLSCNGACYNPSQYVCSDGSLSPNTVTTTKATTTFTPTPTTTTTPTPTTTSATSTNVIAQCGSAWYDSQSYICYGNILCPIINGSPLLACGNACYDSSIYGCSNGALVAA.

The first 20 residues, 1-20 (MSSYLRSFIFGLLTISLAQC), serve as a signal peptide directing secretion. An N-linked (GlcNAc...) asparagine glycan is attached at Asn37. A beta-sandwich subdomain region spans residues 45 to 272 (TNVFDSVVDT…NGYIQIAKIP (228 aa)). Residues 45 to 741 (TNVFDSVVDT…AYAAGLWAND (697 aa)) form the GH81 domain. Residues 273 to 364 (LGDGTAEALY…AGNSITFAEA (92 aa)) form an alpha/beta subdomain region. The interval 379–741 (GQIGYSEEAL…AYAAGLWAND (363 aa)) is (alpha/beta)6 barrel subdomain. Asp492 is a catalytic residue. Residues His496, Asp567, Glu569, Glu573, and Tyr650 each contribute to the (1,3-beta-D-glucosyl)n site. Residues Glu569 and Glu573 contribute to the active site. The tract at residues 748 to 1016 (SSSSTTTTST…GCSNGALVAA (269 aa)) is required for catalytic activity against insoluble beta-glucan and to restrict localization of the enzyme to the cell septum. A disordered region spans residues 844–872 (SSTTSSITPTPTTTSSITPTPTTTSTTTT).

It belongs to the glycosyl hydrolase 81 family.

The protein localises to the cell septum. It catalyses the reaction Hydrolysis of (1-&gt;3)-beta-D-glucosidic linkages in (1-&gt;3)-beta-D-glucans.. Cleaves internal linkages in 1,3-beta-glucan. Has a role in cell separation where it is required for the degradation of the primary septum after completion of cytokinesis. This is Primary septum glucan endo-1,3-beta-D-glucosidase from Schizosaccharomyces pombe (strain 972 / ATCC 24843) (Fission yeast).